Consider the following 643-residue polypeptide: Rhophilin-1 (643 aa).

The disordered stretch occupies residues 1 to 43 (MILEERPDGQGTGEESSRPQDDGSIRKGYGSFVQNQPGQLQSH). Residues 15–25 (ESSRPQDDGSI) show a composition bias toward basic and acidic residues. An REM-1 domain is found at 30–104 (GSFVQNQPGQ…LAELSTSVDV (75 aa)). A Phosphoserine modification is found at S31. The span at 32–42 (FVQNQPGQLQS) shows a compositional bias: polar residues. The region spanning 115-462 (PMIPLGLKET…LAKYSQLERE (348 aa)) is the BRO1 domain. In terms of domain architecture, PDZ spans 500–577 (PVHMTRGEGS…EGVSLQVVSL (78 aa)).

This sequence belongs to the RHPN family. Binds specifically to GTP-Rho. Interacts with ROPN1. In terms of tissue distribution, highly expressed in testis.

Has no enzymatic activity. May serve as a target for Rho, and interact with some cytoskeletal component upon Rho binding or relay a Rho signal to other molecules. The protein is Rhophilin-1 (Rhpn1) of Mus musculus (Mouse).